The primary structure comprises 287 residues: Nucleoid occlusion protein (287 aa).

Residues 146 to 165 (EALAQRVGKSQSAIANKMRL) constitute a DNA-binding region (H-T-H motif).

Belongs to the ParB family.

It is found in the cytoplasm. The protein localises to the nucleoid. In terms of biological role, effects nucleoid occlusion by binding relatively nonspecifically to DNA and preventing the assembly of the division machinery in the vicinity of the nucleoid, especially under conditions that disturb the cell cycle. It helps to coordinate cell division and chromosome segregation by preventing the formation of the Z ring through the nucleoid, which would cause chromosome breakage. This is Nucleoid occlusion protein from Listeria monocytogenes serotype 4a (strain HCC23).